A 204-amino-acid chain; its full sequence is Ribonuclease HII (204 aa).

The RNase H type-2 domain maps to 16–204 (ESIAGCDEVG…RRSFLKKILK (189 aa)). A divalent metal cation is bound by residues D22, E23, and D120.

It belongs to the RNase HII family. Requires Mn(2+) as cofactor. It depends on Mg(2+) as a cofactor.

It is found in the cytoplasm. The enzyme catalyses Endonucleolytic cleavage to 5'-phosphomonoester.. In terms of biological role, endonuclease that specifically degrades the RNA of RNA-DNA hybrids. The sequence is that of Ribonuclease HII from Alkaliphilus metalliredigens (strain QYMF).